The primary structure comprises 451 residues: Tubulin alpha-1A chain (451 aa).

The MREC motif motif lies at 1–4 (MREC). Residues Gln11, Glu71, Ser140, Gly144, Thr145, Thr179, Asn206, and Asn228 each coordinate GTP. Glu71 is a Mg(2+) binding site. Glu254 is an active-site residue. Residues 432 to 451 (YEEVGVDSVEGEGEEEGEEY) are disordered. Position 445 is a 5-glutamyl polyglutamate (Glu445).

The protein belongs to the tubulin family. In terms of assembly, dimer of alpha and beta chains. A typical microtubule is a hollow water-filled tube with an outer diameter of 25 nm and an inner diameter of 15 nM. Alpha-beta heterodimers associate head-to-tail to form protofilaments running lengthwise along the microtubule wall with the beta-tubulin subunit facing the microtubule plus end conferring a structural polarity. Microtubules usually have 13 protofilaments but different protofilament numbers can be found in some organisms and specialized cells. Mg(2+) serves as cofactor. In terms of processing, some glutamate residues at the C-terminus are polyglycylated, resulting in polyglycine chains on the gamma-carboxyl group. Glycylation is mainly limited to tubulin incorporated into axonemes (cilia and flagella) whereas glutamylation is prevalent in neuronal cells, centrioles, axonemes, and the mitotic spindle. Both modifications can coexist on the same protein on adjacent residues, and lowering polyglycylation levels increases polyglutamylation, and reciprocally. The precise function of polyglycylation is still unclear. Post-translationally, some glutamate residues at the C-terminus are polyglutamylated, resulting in polyglutamate chains on the gamma-carboxyl group. Polyglutamylation plays a key role in microtubule severing by spastin (SPAST). SPAST preferentially recognizes and acts on microtubules decorated with short polyglutamate tails: severing activity by SPAST increases as the number of glutamates per tubulin rises from one to eight, but decreases beyond this glutamylation threshold. Undergoes a tyrosination/detyrosination cycle, the cyclic removal and re-addition of a C-terminal tyrosine residue by the enzymes tubulin tyrosine carboxypeptidase (MATCAP1, VASH1 or VASH2) and tubulin tyrosine ligase (TTL), respectively. In terms of processing, tyrosination promotes microtubule interaction with CAP-Gly microtubule plus-end tracking proteins. Tyrosinated tubulins regulate the initiation of dynein-driven motility. Post-translationally, detyrosination is involved in metaphase plate congression by guiding chromosomes during mitosis. Detyrosination increases microtubules-dependent mechanotransduction in dystrophic cardiac and skeletal muscle. In cardiomyocytes, detyrosinated microtubules are required to resist to contractile compression during contraction.

It localises to the cytoplasm. The protein resides in the cytoskeleton. It catalyses the reaction GTP + H2O = GDP + phosphate + H(+). In terms of biological role, tubulin is the major constituent of microtubules, a cylinder consisting of laterally associated linear protofilaments composed of alpha- and beta-tubulin heterodimers. Microtubules grow by the addition of GTP-tubulin dimers to the microtubule end, where a stabilizing cap forms. Below the cap, tubulin dimers are in GDP-bound state, owing to GTPase activity of alpha-tubulin. The chain is Tubulin alpha-1A chain (TUBA1A) from Gallus gallus (Chicken).